Reading from the N-terminus, the 64-residue chain is Large ribosomal subunit protein bL35 (64 aa).

Over residues 1 to 42 (MPKAKTHSGASKRFRRTGTGKIVRQKANRRHLLEHKSSKRTR) the composition is skewed to basic residues. The disordered stretch occupies residues 1–64 (MPKAKTHSGA…TKRVKSLLNG (64 aa)).

The protein belongs to the bacterial ribosomal protein bL35 family.

The chain is Large ribosomal subunit protein bL35 from Mycobacterium ulcerans (strain Agy99).